The chain runs to 442 residues: MPENSPETMTRNRSIFLLSLGCSKNTVDSERLIGQARRKGLSFTNEPDEADIVIINTCGFIADAKTESIDEILAAAEKRKNGEIEALYVMGCLSALYAAELRAELPEVDRFFGTADLPEILNILGTAYDPATRFERSLLSPSHYAWLKLSEGCSRTCSFCAIPKMRGRYKSESMEDLLQEATRLKAKGVKELNLIAQDITPYGLDLYGTSRLNDLMRELSDLNFDWIRLLYAYPLDFPLEVIDTMRERENICDYLDMPVQHICDRILASMKRGIDKQGTIGLLESIRKRNPNIRLRTTMIVGYPGETRAEFEELLQFVREFRFDRLGCFPYSHEEHTAAYDNLEDDIPEEEKQERVGELMELQEGISEKKNRALEEKALKVLVEEVEDNLAFARTEYDAPEVDNECVLDTAGIDIRPGDFCMATIEESSAYELVGRIKNVIP.

One can recognise an MTTase N-terminal domain in the interval 13–129 (RSIFLLSLGC…ILNILGTAYD (117 aa)). Cys-22, Cys-58, Cys-92, Cys-153, Cys-157, and Cys-160 together coordinate [4Fe-4S] cluster. Positions 139–369 (LSPSHYAWLK…MELQEGISEK (231 aa)) constitute a Radical SAM core domain. The TRAM domain maps to 372 to 439 (RALEEKALKV…AYELVGRIKN (68 aa)).

This sequence belongs to the methylthiotransferase family. RimO subfamily. It depends on [4Fe-4S] cluster as a cofactor.

It localises to the cytoplasm. The enzyme catalyses L-aspartate(89)-[ribosomal protein uS12]-hydrogen + (sulfur carrier)-SH + AH2 + 2 S-adenosyl-L-methionine = 3-methylsulfanyl-L-aspartate(89)-[ribosomal protein uS12]-hydrogen + (sulfur carrier)-H + 5'-deoxyadenosine + L-methionine + A + S-adenosyl-L-homocysteine + 2 H(+). Its function is as follows. Catalyzes the methylthiolation of an aspartic acid residue of ribosomal protein uS12. The chain is Ribosomal protein uS12 methylthiotransferase RimO from Chlorobium phaeobacteroides (strain BS1).